Reading from the N-terminus, the 163-residue chain is T-cell surface glycoprotein CD3 zeta chain (163 aa).

The first 21 residues, 1–21, serve as a signal peptide directing secretion; sequence MKWKALFTAAILQAQLPITEA. At 22–30 the chain is on the extracellular side; it reads QSFGLLDPK. Residues 31-51 traverse the membrane as a helical segment; the sequence is LCYLLDGILFIYGVILTALFL. Residues 52 to 163 are Cytoplasmic-facing; sequence RVKFSRSADA…ALHMQALPPR (112 aa). Ser-58 is subject to Phosphoserine. ITAM domains are found at residues 61 to 89, 99 to 127, and 130 to 158; these read APAY…LDKR, KPRR…EIGM, and ERRR…LHMQ. Phosphotyrosine occurs at positions 64, 72, 83, 110, 122, 141, and 152. Residues 83 to 98 are compositionally biased toward basic and acidic residues; that stretch reads YDVLDKRRGRDPEMGG. Residues 83–111 form a disordered region; it reads YDVLDKRRGRDPEMGGKPRRKNPQEGLYN.

Belongs to the CD3Z/FCER1G family. In terms of assembly, the TCR-CD3 complex is composed of a CD3D/CD3E and a CD3G/CD3E heterodimers that preferentially associate with TCRalpha and TCRbeta, respectively, to form TCRalpha/CD3E/CD3G and TCRbeta/CD3G/CD3E trimers. In turn, the hexamer interacts with CD3Z homodimer to form the TCR-CD3 complex. Alternatively, TCRalpha and TCRbeta can be replaced by TCRgamma and TCRdelta. Interacts with SLA. Interacts with TRAT1. Interacts with DOCK2. Interacts with SLA2. Interacts with SHB. Interacts with ZAP70. Interacts (tyrosine phosphorylated) with SHC1 (via SH2 domain). Interacts with PTPRC. Interacts with CRK; this interaction regulates CD3Z phosphorylation. Interacts (on T cell side) with CD81, ICAM1 and CD9 at immunological synapses between antigen-presenting cells and T cells. Interacts with CD160. Interacts with LY6E. Interacts with LY6E. The signaling subunit of immunoglobulin gamma (IgG) Fc receptor complex. As a homodimer or a heterodimer with FCER1G, associates with the ligand binding subunit FCGR3A (via transmembrane domain); this interaction is a prerequisite for Fc receptor complex expression on the cell surface. Interacts with CD5. In terms of processing, phosphorylated on Tyr residues after T-cell receptor triggering by LCK in association with CD4/CD8.

Its subcellular location is the cell membrane. Functionally, part of the TCR-CD3 complex present on T-lymphocyte cell surface that plays an essential role in adaptive immune response. When antigen presenting cells (APCs) activate T-cell receptor (TCR), TCR-mediated signals are transmitted across the cell membrane by the CD3 chains CD3D, CD3E, CD3G and CD3Z. All CD3 chains contain immunoreceptor tyrosine-based activation motifs (ITAMs) in their cytoplasmic domain. Upon TCR engagement, these motifs become phosphorylated by Src family protein tyrosine kinases LCK and FYN, resulting in the activation of downstream signaling pathways. CD3Z ITAMs phosphorylation creates multiple docking sites for the protein kinase ZAP70 leading to ZAP70 phosphorylation and its conversion into a catalytically active enzyme. Plays an important role in intrathymic T-cell differentiation. Additionally, participates in the activity-dependent synapse formation of retinal ganglion cells (RGCs) in both the retina and dorsal lateral geniculate nucleus (dLGN). The chain is T-cell surface glycoprotein CD3 zeta chain (CD247) from Sus scrofa (Pig).